A 276-amino-acid polypeptide reads, in one-letter code: Large ribosomal subunit protein uL2 (276 aa).

Disordered regions lie at residues 33–55 (LVEA…RHIG) and 221–276 (RGTA…AKKK).

This sequence belongs to the universal ribosomal protein uL2 family. In terms of assembly, part of the 50S ribosomal subunit. Forms a bridge to the 30S subunit in the 70S ribosome.

Functionally, one of the primary rRNA binding proteins. Required for association of the 30S and 50S subunits to form the 70S ribosome, for tRNA binding and peptide bond formation. It has been suggested to have peptidyltransferase activity; this is somewhat controversial. Makes several contacts with the 16S rRNA in the 70S ribosome. The sequence is that of Large ribosomal subunit protein uL2 from Psychrobacter sp. (strain PRwf-1).